A 154-amino-acid polypeptide reads, in one-letter code: MNALILYGTETGNAEACATTISQVLADTVDTKVHDLADMTPRAMLDSGADLIVFATATYGEGEFAGGGAAFFETLRETKPDLSGLRFAVFGLGDSYYTTFNQAGATAATILASLGGTQVGDTARHDTSSGDDPEETAEEWAREILTALATPAVS.

A Flavodoxin-like domain is found at 3-145 (ALILYGTETG…TAEEWAREIL (143 aa)). FMN is bound by residues 9-13 (TETGN) and 89-120 (VFGLGDSYYTTFNQAGATAATILASLGGTQVG).

The cofactor is FMN.

Its function is as follows. Involved in the degradation of cineol (eucalyptol). The FMN protein, cindoxin, shuttles electrons between the FAD-containing cindoxin reductase (CinB) and 1,8-cineole 2-endo-monooxygenase (CinA). In Citrobacter braakii, this protein is Cindoxin (cinC).